The chain runs to 98 residues: MNLIDLILIAIYVIGISGLIFNKNNIINILIISELNLGTLGMLFVLASVELNDILGELSGLYILTFTAAESAIGLAIVVILYSKTGIINIRHLNKLKG.

3 consecutive transmembrane segments (helical) span residues 1 to 21 (MNLI…GLIF), 26 to 46 (IINI…LFVL), and 61 to 81 (LYIL…VVIL).

The protein belongs to the complex I subunit 4L family.

Its subcellular location is the mitochondrion membrane. It carries out the reaction a ubiquinone + NADH + 5 H(+)(in) = a ubiquinol + NAD(+) + 4 H(+)(out). In terms of biological role, core subunit of the mitochondrial membrane respiratory chain NADH dehydrogenase (Complex I) that is believed to belong to the minimal assembly required for catalysis. Complex I functions in the transfer of electrons from NADH to the respiratory chain. The immediate electron acceptor for the enzyme is believed to be ubiquinone. In Dictyostelium discoideum (Social amoeba), this protein is NADH-ubiquinone oxidoreductase chain 4L (nad4L).